Consider the following 117-residue polypeptide: MPLYEHVMIARQDLSNTQAEGLIEHFGTVLSDNGGKLVDHEYWGVKTMAYKINKNRKGHYAFLRSDAPAPAVHEMERLMRLHDDVMRVLTIKVDEHAELPSVQMQKREERGDRRERR.

The protein belongs to the bacterial ribosomal protein bS6 family.

Its function is as follows. Binds together with bS18 to 16S ribosomal RNA. The chain is Small ribosomal subunit protein bS6 from Roseobacter denitrificans (strain ATCC 33942 / OCh 114) (Erythrobacter sp. (strain OCh 114)).